We begin with the raw amino-acid sequence, 406 residues long: Endo-xylogalacturonan hydrolase A (406 aa).

The first 18 residues, 1–18, serve as a signal peptide directing secretion; that stretch reads MALYRNLYLLASLGLSSA. PbH1 repeat units follow at residues 183–213, 214–257, 266–289, 299–320, and 333–375; these read ATNV…DIGE, STYV…SVGS, VKNI…KTYP, VSNV…QIQS, and PGNA…SISG. The active-site Proton donor is D228. Residue H251 is part of the active site. Residues N278 and N301 are each glycosylated (N-linked (GlcNAc...) asparagine).

Belongs to the glycosyl hydrolase 28 family.

The protein resides in the secreted. Its function is as follows. Pectinolytic enzyme involved in the degradation of xylogalacturonan (xga), a galacturonan backbone heavily substituted with xylose, and which is one important component of the hairy regions of pectin. Activity requires a galacturonic acid backbone substituted with xylose. The chain is Endo-xylogalacturonan hydrolase A (xghA) from Aspergillus tubingensis.